Reading from the N-terminus, the 117-residue chain is Ig heavy chain V region 5-76 (117 aa).

An N-terminal signal peptide occupies residues 1-19 (MNFVLSLIFLALILKGVQC). A framework-1 region spans residues 20–49 (EVHLVESGGGLVKPGGSLKLSCVVSGFTFN). Cys41 and Cys115 are oxidised to a cystine. Positions 50–54 (KYAMS) are complementarity-determining-1. The segment at 55 to 68 (WVRQTPEKRLEWVA) is framework-2. Positions 69-85 (TISSGGLYTYYPDSVKG) are complementarity-determining-2. Residues 86-117 (RFTISRDNAGNTLYLQMSSLRSEDTAMYYCAR) form a framework-3 region.

The sequence is that of Ig heavy chain V region 5-76 from Mus musculus (Mouse).